The chain runs to 767 residues: MDEMNKINYTEALEYHEKDKPGKIAITTTKSLVTQQDLSLAYSPGVAAPCLEISKNLEAVYKYTSRSNLVAVISNGTAVLGLGNLGAAASKPVMEGKAVLFKKFADIDAIDLEVNTEDPIEFINAVKYLGYSFGGINLEDIKAPECFLIEEKLKSLMDIPVFHDDQHGTAIITAAGLINAAYLTNRTLKDLKIVINGAGAAAIACIDLLIALGVDKSKIILCDTKGVIYKGRTSGMNKWKERYASDTKIRTLTESLNNADVFIGLSVKGAVTKDMISKMAHKPIIFAMANPDPEITPEDIKFVRDDAIIATGRSDYNNQVNNVMGFPYIFRGALDVRASTINTEMKIAAARAIADLARRPVPEEVYKAYSGRKMVFGNEYIIPVPFDPRLITVVATAVAVAAIESGVARVKDFSIDKYKQQLGSRLNPTANYMNFLAEKIHNVPLKRIVFAEGEEEEVISAALMMRDEKYGNPIIIGRVERIEVTLKKIGKDISLAGIQIMNAALSDRLEQYTDYLYKRLQRKGYLYRDCAKLVKTDKNIFAACMVACGDGDALLTGVTKSYIDSLEDIIKVISPKQNRRILGYSIMIAKDHNIIIADNCITEYPNSLELAQIATQTAEIAKNMGITPRVALIAFSTFGNSSQEKTVRIREAVNILDNFSKDKKKLNGIKVDFEYDGEMSVKVALDHDLRKLYQFCRLSGSANVLIMPGLNSAAISTELLQKFSSNSFIGPITNGFAKPVQILPTTATANEILKIATFACVEAIKEV.

The malic enzyme stretch occupies residues 1–430; it reads MDEMNKINYT…QLGSRLNPTA (430 aa). The Proton donor role is filled by tyrosine 42. Lysine 97 acts as the Proton acceptor in catalysis. Residues glutamate 139, aspartate 140, and aspartate 165 each coordinate a divalent metal cation. Residues 198–201, asparagine 290, and asparagine 322 each bind NADP(+); that span reads AGAA. Residues 431-767 are phosphate acetyltransferase; sequence NYMNFLAEKI…FACVEAIKEV (337 aa).

This sequence in the N-terminal section; belongs to the malic enzymes family. In the C-terminal section; belongs to the phosphate acetyltransferase and butyryltransferase family. Mg(2+) is required as a cofactor. It depends on Mn(2+) as a cofactor.

It catalyses the reaction (S)-malate + NADP(+) = pyruvate + CO2 + NADPH. The catalysed reaction is oxaloacetate + H(+) = pyruvate + CO2. This is Probable NADP-dependent malic enzyme from Rickettsia prowazekii (strain Madrid E).